Here is a 245-residue protein sequence, read N- to C-terminus: Ribonuclease 3 (245 aa).

Residues 19 to 148 enclose the RNase III domain; sequence FKVFQEKIGI…FIGALYLDQG (130 aa). A Mg(2+)-binding site is contributed by Glu-61. Residue Asp-65 is part of the active site. Asp-134 and Glu-137 together coordinate Mg(2+). The active site involves Glu-137. The DRBM domain maps to 174 to 243; sequence DYKSQLQELI…AAEALKKLKE (70 aa).

This sequence belongs to the ribonuclease III family. In terms of assembly, homodimer. Mg(2+) serves as cofactor.

It localises to the cytoplasm. It catalyses the reaction Endonucleolytic cleavage to 5'-phosphomonoester.. Functionally, digests double-stranded RNA. Involved in the processing of primary rRNA transcript to yield the immediate precursors to the large and small rRNAs (23S and 16S). Processes some mRNAs, and tRNAs when they are encoded in the rRNA operon. Processes pre-crRNA and tracrRNA of type II CRISPR loci if present in the organism. The chain is Ribonuclease 3 from Bacillus cereus (strain ZK / E33L).